A 216-amino-acid chain; its full sequence is Probable GTP-binding protein EngB (216 aa).

Positions 37-214 constitute an EngB-type G domain; sequence QGLEVAFAGR…RAAIIKLVAE (178 aa). Residues 45-52, 72-76, 92-95, 159-162, and 193-195 contribute to the GTP site; these read GRSNVGKS, GRTQE, DMPG, TKAD, and TSS. Residues Ser52 and Thr74 each coordinate Mg(2+).

It belongs to the TRAFAC class TrmE-Era-EngA-EngB-Septin-like GTPase superfamily. EngB GTPase family. Requires Mg(2+) as cofactor.

Functionally, necessary for normal cell division and for the maintenance of normal septation. This Rhodopseudomonas palustris (strain BisA53) protein is Probable GTP-binding protein EngB.